Consider the following 259-residue polypeptide: UPF0246 protein RD1_0358 (259 aa).

Belongs to the UPF0246 family.

This chain is UPF0246 protein RD1_0358, found in Roseobacter denitrificans (strain ATCC 33942 / OCh 114) (Erythrobacter sp. (strain OCh 114)).